Reading from the N-terminus, the 279-residue chain is Thymidylate synthase (279 aa).

133-134 provides a ligand contact to dUMP; it reads RR. The active-site Nucleophile is C154. Residues 178-181, N189, and 219-221 contribute to the dUMP site; these read RSND and HIY. Residue D181 coordinates (6R)-5,10-methylene-5,6,7,8-tetrahydrofolate. A278 is a (6R)-5,10-methylene-5,6,7,8-tetrahydrofolate binding site.

It belongs to the thymidylate synthase family. Bacterial-type ThyA subfamily. As to quaternary structure, homodimer.

It localises to the cytoplasm. The enzyme catalyses dUMP + (6R)-5,10-methylene-5,6,7,8-tetrahydrofolate = 7,8-dihydrofolate + dTMP. It participates in pyrimidine metabolism; dTTP biosynthesis. Its function is as follows. Catalyzes the reductive methylation of 2'-deoxyuridine-5'-monophosphate (dUMP) to 2'-deoxythymidine-5'-monophosphate (dTMP) while utilizing 5,10-methylenetetrahydrofolate (mTHF) as the methyl donor and reductant in the reaction, yielding dihydrofolate (DHF) as a by-product. This enzymatic reaction provides an intracellular de novo source of dTMP, an essential precursor for DNA biosynthesis. In Streptococcus pyogenes serotype M3 (strain SSI-1), this protein is Thymidylate synthase.